A 332-amino-acid polypeptide reads, in one-letter code: DNA-directed RNA polymerase subunit alpha (332 aa).

An alpha N-terminal domain (alpha-NTD) region spans residues Met-1–Glu-244. The alpha C-terminal domain (alpha-CTD) stretch occupies residues Ile-259–Asn-332.

The protein belongs to the RNA polymerase alpha chain family. Homodimer. The RNAP catalytic core consists of 2 alpha, 1 beta, 1 beta' and 1 omega subunit. When a sigma factor is associated with the core the holoenzyme is formed, which can initiate transcription.

The catalysed reaction is RNA(n) + a ribonucleoside 5'-triphosphate = RNA(n+1) + diphosphate. In terms of biological role, DNA-dependent RNA polymerase catalyzes the transcription of DNA into RNA using the four ribonucleoside triphosphates as substrates. The protein is DNA-directed RNA polymerase subunit alpha of Mesomycoplasma hyopneumoniae (strain 232) (Mycoplasma hyopneumoniae).